The primary structure comprises 163 residues: MAMMEYLTTRKDELIGWVRKFSIFPYPFVTACCGMEFMAVASTLYDTDRFGAALPRFTPRQSDLLMVVGTITHKEAPVIKRVYDQMCDPKWVMAFGACATSGGVYRNYTVLQGVDRIIPVDIYIPGCPPRPEMVIDAIMKLQDKIAGERHPIFPYEKQNPVPV.

Residues Cys-32, Cys-33, Cys-98, and Cys-127 each coordinate [4Fe-4S] cluster.

This sequence belongs to the complex I 20 kDa subunit family. NDH-1 is composed of 14 different subunits. Subunits NuoB, C, D, E, F, and G constitute the peripheral sector of the complex. [4Fe-4S] cluster is required as a cofactor.

It localises to the cell inner membrane. The enzyme catalyses a quinone + NADH + 5 H(+)(in) = a quinol + NAD(+) + 4 H(+)(out). NDH-1 shuttles electrons from NADH, via FMN and iron-sulfur (Fe-S) centers, to quinones in the respiratory chain. Couples the redox reaction to proton translocation (for every two electrons transferred, four hydrogen ions are translocated across the cytoplasmic membrane), and thus conserves the redox energy in a proton gradient. The chain is NADH-quinone oxidoreductase subunit B from Pelobacter propionicus (strain DSM 2379 / NBRC 103807 / OttBd1).